The primary structure comprises 345 residues: MTLEMMGSMDLDQIVADAQQSFEQAADITTLENEKARFLGKSGALTELLKGLGKLDPEARKTEGARINVVKQQVEAALTARRQALADALLNQRLTAEAIDVTLPGRGAGAGSLHPVMRTWERVEQIFGSIGFDVADGPEIETDWYNFTSLNSPENHPARSMQDTFYVEGKDADGRQLLLRTHTSPMQVRYARMNRPPIKVIAPGRTYRVDSDATHSPMFNQVEGLWIDENISFADLKGVYTDFLKKFFERDDILVRFRPSYFPFTEPSAEIDMMFEQGKNAGKWLEISGSGQVHPTVIRNMGLDPERYIGFAFGSGLERLTMLRYGVQDLRLFFENDLRFLRQFA.

Glu266 provides a ligand contact to Mg(2+).

Belongs to the class-II aminoacyl-tRNA synthetase family. Phe-tRNA synthetase alpha subunit type 1 subfamily. Tetramer of two alpha and two beta subunits. Mg(2+) is required as a cofactor.

It localises to the cytoplasm. It catalyses the reaction tRNA(Phe) + L-phenylalanine + ATP = L-phenylalanyl-tRNA(Phe) + AMP + diphosphate + H(+). The polypeptide is Phenylalanine--tRNA ligase alpha subunit (Burkholderia lata (strain ATCC 17760 / DSM 23089 / LMG 22485 / NCIMB 9086 / R18194 / 383)).